We begin with the raw amino-acid sequence, 123 residues long: Small ribosomal subunit protein uS12 (123 aa).

At D89 the chain carries 3-methylthioaspartic acid.

Belongs to the universal ribosomal protein uS12 family. In terms of assembly, part of the 30S ribosomal subunit. Contacts proteins S8 and S17. May interact with IF1 in the 30S initiation complex.

Its function is as follows. With S4 and S5 plays an important role in translational accuracy. Functionally, interacts with and stabilizes bases of the 16S rRNA that are involved in tRNA selection in the A site and with the mRNA backbone. Located at the interface of the 30S and 50S subunits, it traverses the body of the 30S subunit contacting proteins on the other side and probably holding the rRNA structure together. The combined cluster of proteins S8, S12 and S17 appears to hold together the shoulder and platform of the 30S subunit. The chain is Small ribosomal subunit protein uS12 from Rhodospirillum centenum (strain ATCC 51521 / SW).